The following is a 224-amino-acid chain: Twisted gastrulation protein homolog 1 (224 aa).

The first 26 residues, 1–26 (MRSPCAALSASLLLLLLLLWARSSVG), serve as a signal peptide directing secretion. N53, N82, and N148 each carry an N-linked (GlcNAc...) asparagine glycan.

It belongs to the twisted gastrulation protein family. Interacts with CHRD and BMP4. This interaction enhances CHRD/BMP4 complex formation. Interacts with BMP7.

It is found in the secreted. In terms of biological role, may be involved in dorsoventral axis formation. Seems to antagonize BMP signaling by forming ternary complexes with CHRD and BMPs, thereby preventing BMPs from binding to their receptors. In addition to the anti-BMP function, also has pro-BMP activity, partly mediated by cleavage and degradation of CHRD, which releases BMPs from ternary complexes. May be an important modulator of BMP-regulated cartilage development and chondrocyte differentiation. May play a role in thymocyte development. The chain is Twisted gastrulation protein homolog 1 (TWSG1) from Gallus gallus (Chicken).